The primary structure comprises 420 residues: Histidine--tRNA ligase (420 aa).

This sequence belongs to the class-II aminoacyl-tRNA synthetase family. In terms of assembly, homodimer.

The protein localises to the cytoplasm. The catalysed reaction is tRNA(His) + L-histidine + ATP = L-histidyl-tRNA(His) + AMP + diphosphate + H(+). The protein is Histidine--tRNA ligase of Clostridioides difficile (strain 630) (Peptoclostridium difficile).